The following is a 1275-amino-acid chain: Surfactin synthase subunit 3 (1275 aa).

Positions 968–1043 (GPRNEMEETI…GISAYLKNGG (76 aa)) constitute a Carrier domain. An O-(pantetheine 4'-phosphoryl)serine modification is found at Ser1003. Residues 1059–1271 (QIIFAFPPVL…ILLEFLNTQT (213 aa)) form a thioesterase region. Active-site residues include Ser1120, Asp1147, and His1247.

It belongs to the ATP-dependent AMP-binding enzyme family. Requires pantetheine 4'-phosphate as cofactor.

It functions in the pathway antibiotic biosynthesis; surfactin biosynthesis. In terms of biological role, probably activates a leucine. This is Surfactin synthase subunit 3 (srfAC) from Bacillus subtilis (strain 168).